A 418-amino-acid polypeptide reads, in one-letter code: Gamma-glutamyl phosphate reductase (418 aa).

It belongs to the gamma-glutamyl phosphate reductase family.

The protein resides in the cytoplasm. The catalysed reaction is L-glutamate 5-semialdehyde + phosphate + NADP(+) = L-glutamyl 5-phosphate + NADPH + H(+). Its pathway is amino-acid biosynthesis; L-proline biosynthesis; L-glutamate 5-semialdehyde from L-glutamate: step 2/2. In terms of biological role, catalyzes the NADPH-dependent reduction of L-glutamate 5-phosphate into L-glutamate 5-semialdehyde and phosphate. The product spontaneously undergoes cyclization to form 1-pyrroline-5-carboxylate. This Clostridium kluyveri (strain NBRC 12016) protein is Gamma-glutamyl phosphate reductase.